Reading from the N-terminus, the 406-residue chain is Acetylornithine aminotransferase (406 aa).

Pyridoxal 5'-phosphate contacts are provided by residues 108–109 and phenylalanine 141; that span reads GA. Position 144 (arginine 144) interacts with N(2)-acetyl-L-ornithine. 226–229 serves as a coordination point for pyridoxal 5'-phosphate; it reads DEVQ. The residue at position 255 (lysine 255) is an N6-(pyridoxal phosphate)lysine. Threonine 283 provides a ligand contact to N(2)-acetyl-L-ornithine. Pyridoxal 5'-phosphate is bound at residue threonine 284.

This sequence belongs to the class-III pyridoxal-phosphate-dependent aminotransferase family. ArgD subfamily. In terms of assembly, homodimer. It depends on pyridoxal 5'-phosphate as a cofactor.

Its subcellular location is the cytoplasm. It catalyses the reaction N(2)-acetyl-L-ornithine + 2-oxoglutarate = N-acetyl-L-glutamate 5-semialdehyde + L-glutamate. It functions in the pathway amino-acid biosynthesis; L-arginine biosynthesis; N(2)-acetyl-L-ornithine from L-glutamate: step 4/4. The protein is Acetylornithine aminotransferase of Pseudomonas putida (strain ATCC 47054 / DSM 6125 / CFBP 8728 / NCIMB 11950 / KT2440).